We begin with the raw amino-acid sequence, 492 residues long: Catalase isozyme 3 (492 aa).

Catalysis depends on residues histidine 65 and asparagine 138. Tyrosine 348 is a heme binding site.

This sequence belongs to the catalase family. In terms of assembly, homotetramer. The cofactor is heme.

It localises to the peroxisome. It catalyses the reaction 2 H2O2 = O2 + 2 H2O. Its function is as follows. Occurs in almost all aerobically respiring organisms and serves to protect cells from the toxic effects of hydrogen peroxide. The protein is Catalase isozyme 3 (CAT3) of Nicotiana plumbaginifolia (Leadwort-leaved tobacco).